A 253-amino-acid chain; its full sequence is Ribulose bisphosphate carboxylase large chain (253 aa).

Residues N35 and T85 each coordinate substrate. Catalysis depends on K87, which acts as the Proton acceptor. K89 lines the substrate pocket. Mg(2+) contacts are provided by K113, D115, and E116. N6-carboxylysine is present on K113. H206 (proton acceptor) is an active-site residue. Substrate is bound by residues R207 and H239.

This sequence belongs to the RuBisCO large chain family. Type I subfamily. As to quaternary structure, heterohexadecamer of 8 large chains and 8 small chains; disulfide-linked. The disulfide link is formed within the large subunit homodimers. Mg(2+) is required as a cofactor. Post-translationally, the disulfide bond which can form in the large chain dimeric partners within the hexadecamer appears to be associated with oxidative stress and protein turnover.

The protein resides in the plastid. It localises to the chloroplast. It catalyses the reaction 2 (2R)-3-phosphoglycerate + 2 H(+) = D-ribulose 1,5-bisphosphate + CO2 + H2O. The enzyme catalyses D-ribulose 1,5-bisphosphate + O2 = 2-phosphoglycolate + (2R)-3-phosphoglycerate + 2 H(+). In terms of biological role, ruBisCO catalyzes two reactions: the carboxylation of D-ribulose 1,5-bisphosphate, the primary event in carbon dioxide fixation, as well as the oxidative fragmentation of the pentose substrate in the photorespiration process. Both reactions occur simultaneously and in competition at the same active site. This Magnolia latahensis (Apocynophyllum latahense) protein is Ribulose bisphosphate carboxylase large chain (rbcL).